Reading from the N-terminus, the 128-residue chain is Ribonuclease P protein component (128 aa).

It belongs to the RnpA family. As to quaternary structure, consists of a catalytic RNA component (M1 or rnpB) and a protein subunit.

The enzyme catalyses Endonucleolytic cleavage of RNA, removing 5'-extranucleotides from tRNA precursor.. Its function is as follows. RNaseP catalyzes the removal of the 5'-leader sequence from pre-tRNA to produce the mature 5'-terminus. It can also cleave other RNA substrates such as 4.5S RNA. The protein component plays an auxiliary but essential role in vivo by binding to the 5'-leader sequence and broadening the substrate specificity of the ribozyme. The chain is Ribonuclease P protein component from Prochlorococcus marinus (strain MIT 9215).